A 504-amino-acid chain; its full sequence is MEELRGYLELDRSWQRDFLYTLILQEYIYSLAHDHGFNRTIFLENAGYEKKYSFLIVKRLITRMYQQNHLILSANDSNQNEFLGQKKNLYSQMISEGFAFIVEIPFSLQLLFSLEGKEIXXXXXXRSIHSIFPFLEDKFSHLNYVLDILIPHPVHLEILVQTIRYWTKDASSLHLLRFFLYEYRNWNSRISIKQYISFFSNRNQRLFLFLYNSHVCEYESIFIFLRNQPFHLRSTFSGAFLERILFYEKMEHLVKVFTKNFQVILWFFKDTFIHYVRYQGKSFVASKGTSLLMIKWKYYLVNFWQCYFSVWSQPRRIYINQLSNHSLDFMXFLSSVRLNPSVVRIQMFEKSFIIDNAINTFDTLVPNIHMSGSFAKEKFCNIFGHPISKPVWADLSDSDIIDRFGRICRSLSHYYSGSSRKKSLYRIKYILRLSCARTLARKHKSTVRTFLKRLGSEFLEEFFMEEEKVLSLILPRDSYTSQRFYRGRIWYLDIFCIHDLANHE.

Belongs to the intron maturase 2 family. MatK subfamily.

Its subcellular location is the plastid. The protein resides in the chloroplast. Functionally, usually encoded in the trnK tRNA gene intron. Probably assists in splicing its own and other chloroplast group II introns. This Nepenthes alata (Winged pitcher plant) protein is Maturase K.